Consider the following 402-residue polypeptide: Deoxyguanosinetriphosphate triphosphohydrolase-like protein (402 aa).

Residues 20 to 39 are disordered; it reads PAFSRGRLVPEPESPTRTPF. The region spanning 73 to 217 is the HD domain; that stretch reads RLTHTIEVAQ…AAIADDIAYN (145 aa).

Belongs to the dGTPase family. Type 2 subfamily.

This chain is Deoxyguanosinetriphosphate triphosphohydrolase-like protein, found in Brucella ovis (strain ATCC 25840 / 63/290 / NCTC 10512).